A 62-amino-acid polypeptide reads, in one-letter code: Sperm protamine P1 (62 aa).

Residues 1–62 (MARSRRHSRS…RCSRRRRRRC (62 aa)) form a disordered region.

This sequence belongs to the protamine P1 family. As to expression, testis.

The protein resides in the nucleus. It localises to the chromosome. Protamines substitute for histones in the chromatin of sperm during the haploid phase of spermatogenesis. They compact sperm DNA into a highly condensed, stable and inactive complex. The sequence is that of Sperm protamine P1 (PRM1) from Planigale ingrami (Long-tailed planigale).